We begin with the raw amino-acid sequence, 510 residues long: NAD(P)H-quinone oxidoreductase subunit 2 A, chloroplastic (510 aa).

Helical transmembrane passes span leucine 24–leucine 44, isoleucine 57–phenylalanine 77, isoleucine 99–isoleucine 119, methionine 124–cysteine 144, leucine 149–tyrosine 169, tyrosine 183–glycine 203, proline 227–alanine 247, tryptophan 295–isoleucine 315, methionine 323–aspartate 343, tyrosine 354–leucine 374, alanine 395–phenylalanine 415, isoleucine 418–leucine 438, and methionine 484–isoleucine 504.

This sequence belongs to the complex I subunit 2 family. In terms of assembly, NDH is composed of at least 16 different subunits, 5 of which are encoded in the nucleus.

The protein localises to the plastid. The protein resides in the chloroplast thylakoid membrane. The enzyme catalyses a plastoquinone + NADH + (n+1) H(+)(in) = a plastoquinol + NAD(+) + n H(+)(out). The catalysed reaction is a plastoquinone + NADPH + (n+1) H(+)(in) = a plastoquinol + NADP(+) + n H(+)(out). NDH shuttles electrons from NAD(P)H:plastoquinone, via FMN and iron-sulfur (Fe-S) centers, to quinones in the photosynthetic chain and possibly in a chloroplast respiratory chain. The immediate electron acceptor for the enzyme in this species is believed to be plastoquinone. Couples the redox reaction to proton translocation, and thus conserves the redox energy in a proton gradient. The sequence is that of NAD(P)H-quinone oxidoreductase subunit 2 A, chloroplastic from Spinacia oleracea (Spinach).